We begin with the raw amino-acid sequence, 503 residues long: Cytochrome P450 6l1 (503 aa).

A heme-binding site is contributed by Cys-438.

Belongs to the cytochrome P450 family. It depends on heme as a cofactor. As to expression, detected only in testes and accessory glands of male adults.

The protein localises to the endoplasmic reticulum membrane. Its subcellular location is the microsome membrane. The polypeptide is Cytochrome P450 6l1 (CYP6L1) (Blattella germanica (German cockroach)).